The primary structure comprises 439 residues: Xylose isomerase (439 aa).

Active-site residues include H101 and D104. Positions 232, 268, 271, 296, 307, 309, and 339 each coordinate Mg(2+).

The protein belongs to the xylose isomerase family. As to quaternary structure, homotetramer. Mg(2+) is required as a cofactor.

It is found in the cytoplasm. It carries out the reaction alpha-D-xylose = alpha-D-xylulofuranose. In Pectobacterium atrosepticum (strain SCRI 1043 / ATCC BAA-672) (Erwinia carotovora subsp. atroseptica), this protein is Xylose isomerase.